Here is a 705-residue protein sequence, read N- to C-terminus: uncharacterized protein (705 aa).

Positions 24–52 (CHFCRVRKLKCDRVRPFCGSCSSRNRKQC) form a DNA-binding region, zn(2)-C6 fungal-type.

It is found in the nucleus. This is an uncharacterized protein from Saccharomyces cerevisiae (strain ATCC 204508 / S288c) (Baker's yeast).